We begin with the raw amino-acid sequence, 64 residues long: MNSFVVVLLLFIAILCNAEQESDENARSCNRLGKKCNSDGDCCRYGERCLSSGVGYYCKPDFGP.

A signal peptide spans 1-18 (MNSFVVVLLLFIAILCNA). Disulfide bonds link Cys-29–Cys-43, Cys-36–Cys-49, and Cys-42–Cys-58.

It belongs to the scorpion calcin-like family. As to expression, expressed by the venom gland.

Its subcellular location is the secreted. Functionally, may increase intracellular calcium release through the activation of nuclear inositol 1,4,5-trisphosphate receptors (ITPR) of cardiomyocytes, thereby causing an increase in the contraction frequency of these cells. The sequence is that of Phi-buthitoxin-Hj1a from Hottentotta judaicus (Black scorpion).